Here is a 607-residue protein sequence, read N- to C-terminus: MNLEELKKRQGKIRNFSIIAHIDHGKSTLADRILEKTETVSSREMQAQLLDSMDLERERGITIKLNAIELNYTAKDGETYIFHLIDTPGHVDFTYEVSRSLAACEGAILVVDAAQGIEAQTLANVYLALDNDLEIMPIINKIDLPAADPERVRTEIEDVIGLDASEAVLASAKAGIGIEEILEQIVEKVPAPTGDVTAPLKALIFDSVYDAYRGVILQVRVMDGVVKPGDKIQLMSNSKTFDVAEVGIFTPKAVGRDFLATGDVGYIAASIKTVQDTRVGDTVTLATNPAAEPLHGYKQMNPMVFAGLYPIESNKYNDLREALEKLQLNDASLQFEPETSQALGFGFRCGFLGLLHMDVIQERLEREFNIDLIMTAPSVIYKVNLTDGESMDVSNPSEFPDPTKIATIEEPYVKAQIMVPQEFVGAVMELAQRKRGDFVTMDYIDDNRVNVIYQIPLAEIVFDFFDKLKSSTRGYASFDYELSEYRPSKLVKMDILLNGDKVDALSFIVHKDFAYERGKLIVDKLKKIIPRQQFEVPIQAAIGHKIVARTDIKALRKNVLAKCYGGDVSRKRKLLEKQKAGKKRMKSIGSVEVPQEAFLSVLSMDEE.

Residues 11-193 (GKIRNFSIIA…QIVEKVPAPT (183 aa)) form the tr-type G domain. Residues 23–28 (DHGKST) and 140–143 (NKID) contribute to the GTP site.

It belongs to the TRAFAC class translation factor GTPase superfamily. Classic translation factor GTPase family. LepA subfamily.

The protein localises to the cell membrane. It catalyses the reaction GTP + H2O = GDP + phosphate + H(+). Functionally, required for accurate and efficient protein synthesis under certain stress conditions. May act as a fidelity factor of the translation reaction, by catalyzing a one-codon backward translocation of tRNAs on improperly translocated ribosomes. Back-translocation proceeds from a post-translocation (POST) complex to a pre-translocation (PRE) complex, thus giving elongation factor G a second chance to translocate the tRNAs correctly. Binds to ribosomes in a GTP-dependent manner. The chain is Elongation factor 4 from Streptococcus pneumoniae (strain Taiwan19F-14).